The following is a 343-amino-acid chain: MTRQITITRPDDWHLHVRDGDILNDVVPATAACFGRAIIMPNLVPPVTDASAAMAYRDRILAAARGTDFQPLMTLYLTESTTAETIREAKAAGVVAAKLYPAGATTNSASGVTDIRNIYPVLEAMADCGMLLLVHGEVTDSDIDIFDREKVFLERVLAPTLTAFPSLRVVLEHITTAESAEFVRNHQGNNLGATLTPQHLMYNRNHMLVGGIRPHLYCLPILKRNKHQEALREAVASGDPRFFLGTDSAPHAKDKKEAACGCAGCYSAYGAIGLYADIFEELGILDKLEAFASFNGADFYGLPRNTDTVTLVREPWTMPENLPLAGGGIVPLKAGETVNWRLA.

Zn(2+)-binding residues include His-14 and His-16. Residues 16-18 (HVR) and Asn-42 each bind substrate. Lys-98, His-135, and His-173 together coordinate Zn(2+). An N6-carboxylysine modification is found at Lys-98. Position 135 (His-135) interacts with substrate. Leu-219 is a binding site for substrate. Asp-247 contributes to the Zn(2+) binding site. The active site involves Asp-247. 2 residues coordinate substrate: His-251 and Ala-263.

This sequence belongs to the metallo-dependent hydrolases superfamily. DHOase family. Class II DHOase subfamily. In terms of assembly, homodimer. Zn(2+) is required as a cofactor.

It carries out the reaction (S)-dihydroorotate + H2O = N-carbamoyl-L-aspartate + H(+). It functions in the pathway pyrimidine metabolism; UMP biosynthesis via de novo pathway; (S)-dihydroorotate from bicarbonate: step 3/3. Catalyzes the reversible cyclization of carbamoyl aspartate to dihydroorotate. This Marinobacter nauticus (strain ATCC 700491 / DSM 11845 / VT8) (Marinobacter aquaeolei) protein is Dihydroorotase.